The sequence spans 307 residues: Aspartate carbamoyltransferase catalytic subunit (307 aa).

Residues R49 and T50 each coordinate carbamoyl phosphate. K77 is a binding site for L-aspartate. Positions 99, 127, and 130 each coordinate carbamoyl phosphate. Residues R160 and R211 each coordinate L-aspartate. Residues A250 and P251 each contribute to the carbamoyl phosphate site.

The protein belongs to the aspartate/ornithine carbamoyltransferase superfamily. ATCase family. Heterododecamer (2C3:3R2) of six catalytic PyrB chains organized as two trimers (C3), and six regulatory PyrI chains organized as three dimers (R2).

The enzyme catalyses carbamoyl phosphate + L-aspartate = N-carbamoyl-L-aspartate + phosphate + H(+). It participates in pyrimidine metabolism; UMP biosynthesis via de novo pathway; (S)-dihydroorotate from bicarbonate: step 2/3. Functionally, catalyzes the condensation of carbamoyl phosphate and aspartate to form carbamoyl aspartate and inorganic phosphate, the committed step in the de novo pyrimidine nucleotide biosynthesis pathway. The sequence is that of Aspartate carbamoyltransferase catalytic subunit from Bacillus pumilus (strain SAFR-032).